Reading from the N-terminus, the 322-residue chain is tRNA N6-adenosine threonylcarbamoyltransferase (322 aa).

Residues histidine 109 and histidine 113 each coordinate Fe cation. Residues 131-135 (LISGG), aspartate 164, glycine 177, aspartate 181, and asparagine 277 contribute to the substrate site. Fe cation is bound at residue aspartate 303.

It belongs to the KAE1 / TsaD family. It depends on Fe(2+) as a cofactor.

Its subcellular location is the cytoplasm. It carries out the reaction L-threonylcarbamoyladenylate + adenosine(37) in tRNA = N(6)-L-threonylcarbamoyladenosine(37) in tRNA + AMP + H(+). Functionally, required for the formation of a threonylcarbamoyl group on adenosine at position 37 (t(6)A37) in tRNAs that read codons beginning with adenine. Is involved in the transfer of the threonylcarbamoyl moiety of threonylcarbamoyl-AMP (TC-AMP) to the N6 group of A37, together with TsaE and TsaB. TsaD likely plays a direct catalytic role in this reaction. This is tRNA N6-adenosine threonylcarbamoyltransferase from Mesomycoplasma hyopneumoniae (strain 232) (Mycoplasma hyopneumoniae).